A 573-amino-acid polypeptide reads, in one-letter code: MLRLPTVFRQMRPVSRVLAPHLTRAYAKDVKFGADARALMLRGVDLLADAVAVTMGPKGRTVIIEQSWGSPKVTKDGVTVAKSIDLKDKYKNIGAKLVQDVANNTNEEAGDGTTTATVLARSIAKEGFEKISKGANPVEIRRGVMLAVDAVIAELKKQSKPVTTPEEIAQVATISANGDKEIGNIISDAMKKVGRKGVITVKDGKTLNDELEIIEGMKFDRGYISPYFINTSKGQKCEFQDAYVLLSEKKISSVQSIVPALEIANAHRKPLVIIAEDVDGEALSTLVLNRLKVGLQVVAVKAPGFGDNRKNQLKDMAIATGGAVFGEEGLTLNLEDVQPHDLGKVGEVIVTKDDAMLLEGKGDKAQIEKRIQEIIEQLDVTTSEYEKEKLNERLAKLSDGVAVLKVGGTSDVEVNEKKDRVTDALNATRAAAEEGIVLGGGCALLRCIPALDSLTPANEDQKIGIEIIKRTLKIPAMTIAKNAGVEGSLIVEKIMQSSSEVGYDAMVGDFVNMVGKGIIDPTKVVRTALLDAAGVASLLTTAEVVVTEIPKEEKDPGMGAMGGMGGGMGGGMF.

Residues 1–26 (MLRLPTVFRQMRPVSRVLAPHLTRAY) constitute a mitochondrion transit peptide. Lys-31 is subject to N6-succinyllysine. 2 positions are modified to phosphoserine: Ser-67 and Ser-70. ATP is bound at residue Lys-75. An N6-acetyllysine modification is found at Lys-75. Lys-82 is subject to N6-acetyllysine; alternate. The residue at position 82 (Lys-82) is an N6-succinyllysine; alternate. Position 87 is an N6-acetyllysine (Lys-87). Tyr-90 is modified (phosphotyrosine). Lys-91 carries the post-translational modification N6-acetyllysine. Residue 111-115 (DGTTT) participates in ATP binding. An N6-acetyllysine; alternate modification is found at Lys-125. Residue Lys-125 is modified to N6-succinyllysine; alternate. Lys-130 is modified (N6-acetyllysine). Lys-133 carries the post-translational modification N6-acetyllysine; alternate. Lys-133 bears the N6-succinyllysine; alternate mark. An N6-malonyllysine; alternate modification is found at Lys-133. Lys-156 is subject to N6-acetyllysine. N6-acetyllysine; alternate occurs at positions 191, 202, 205, 218, and 236. Residues Lys-191, Lys-202, Lys-205, Lys-218, and Lys-236 each carry the N6-succinyllysine; alternate modification. The residue at position 249 (Lys-249) is an N6-acetyllysine. N6-acetyllysine; alternate is present on Lys-250. N6-succinyllysine; alternate is present on Lys-250. Lys-269 and Lys-292 each carry N6-acetyllysine. Lys-301 is modified (N6-succinyllysine). Lys-314 is subject to N6-acetyllysine. Lys-352 bears the N6-acetyllysine; alternate mark. At Lys-352 the chain carries N6-succinyllysine; alternate. Lys-389 bears the N6-acetyllysine mark. Position 396 is an N6-acetyllysine; alternate (Lys-396). Lys-396 carries the post-translational modification N6-succinyllysine; alternate. Residue Ser-410 is modified to Phosphoserine. Gly-440 lines the ATP pocket. The residue at position 469 (Lys-469) is an N6-acetyllysine. Lys-481 is subject to N6-acetyllysine; alternate. The residue at position 481 (Lys-481) is an N6-succinyllysine; alternate. Ser-488 is modified (phosphoserine). Asp-520 is a binding site for ATP. Residue Lys-551 forms a Glycyl lysine isopeptide (Lys-Gly) (interchain with G-Cter in SUMO2) linkage.

It belongs to the chaperonin (HSP60) family. As to quaternary structure, homoheptamer arranged in a ring structure. The functional units of these chaperonins consist of heptameric rings of the large subunit Hsp60, which function as a back-to-back double ring. Interacts with 2 heptameric Hsp10 rings to form the symmetrical football complex. Interacts with HRAS. Interacts with ATAD3A. Interacts with ETFBKMT and EEF1AKMT3. Interacts with MFHAS1.

Its subcellular location is the mitochondrion matrix. The enzyme catalyses ATP + H2O + a folded polypeptide = ADP + phosphate + an unfolded polypeptide.. Its function is as follows. Chaperonin implicated in mitochondrial protein import and macromolecular assembly. Together with Hsp10, facilitates the correct folding of imported proteins. May also prevent misfolding and promote the refolding and proper assembly of unfolded polypeptides generated under stress conditions in the mitochondrial matrix. The functional units of these chaperonins consist of heptameric rings of the large subunit Hsp60, which function as a back-to-back double ring. In a cyclic reaction, Hsp60 ring complexes bind one unfolded substrate protein per ring, followed by the binding of ATP and association with 2 heptameric rings of the co-chaperonin Hsp10. This leads to sequestration of the substrate protein in the inner cavity of Hsp60 where, for a certain period of time, it can fold undisturbed by other cell components. Synchronous hydrolysis of ATP in all Hsp60 subunits results in the dissociation of the chaperonin rings and the release of ADP and the folded substrate protein. The sequence is that of 60 kDa heat shock protein, mitochondrial (HSPD1) from Pongo abelii (Sumatran orangutan).